A 266-amino-acid polypeptide reads, in one-letter code: Isoprenyl transferase (266 aa).

Aspartate 36 is a catalytic residue. Aspartate 36 contacts Mg(2+). Substrate-binding positions include 37-40, tryptophan 41, arginine 49, histidine 53, and 81-83; these read GNGR and STE. Asparagine 84 acts as the Proton acceptor in catalysis. Residues tryptophan 85, arginine 87, arginine 204, and 210–212 contribute to the substrate site; that span reads RIS. Glutamate 223 is a binding site for Mg(2+).

It belongs to the UPP synthase family. As to quaternary structure, homodimer. It depends on Mg(2+) as a cofactor.

Functionally, catalyzes the condensation of isopentenyl diphosphate (IPP) with allylic pyrophosphates generating different type of terpenoids. This is Isoprenyl transferase from Prochlorococcus marinus (strain SARG / CCMP1375 / SS120).